The chain runs to 479 residues: Sulfate adenylyltransferase subunit 1 (479 aa).

The tr-type G domain occupies 22 to 238 (KDMLRFLTCG…DSMDISKEPK (217 aa)). The tract at residues 31–38 (GSVDDGKS) is G1. A GTP-binding site is contributed by 31-38 (GSVDDGKS). The interval 89–93 (GITID) is G2. The interval 110-113 (DTPG) is G3. Residues 110-114 (DTPGH) and 165-168 (NKMD) each bind GTP. The interval 165–168 (NKMD) is G4. The G5 stretch occupies residues 202–204 (SAL).

This sequence belongs to the TRAFAC class translation factor GTPase superfamily. Classic translation factor GTPase family. CysN/NodQ subfamily. Heterodimer composed of CysD, the smaller subunit, and CysN.

It carries out the reaction sulfate + ATP + H(+) = adenosine 5'-phosphosulfate + diphosphate. It participates in sulfur metabolism; hydrogen sulfide biosynthesis; sulfite from sulfate: step 1/3. In terms of biological role, with CysD forms the ATP sulfurylase (ATPS) that catalyzes the adenylation of sulfate producing adenosine 5'-phosphosulfate (APS) and diphosphate, the first enzymatic step in sulfur assimilation pathway. APS synthesis involves the formation of a high-energy phosphoric-sulfuric acid anhydride bond driven by GTP hydrolysis by CysN coupled to ATP hydrolysis by CysD. The polypeptide is Sulfate adenylyltransferase subunit 1 (Sulfurovum sp. (strain NBC37-1)).